Reading from the N-terminus, the 938-residue chain is Isoleucine--tRNA ligase (938 aa).

The 'HIGH' region signature appears at 61 to 71 (PYANGDIHLGT). Position 559 (E559) interacts with L-isoleucyl-5'-AMP. Residues 601–605 (KMSKS) carry the 'KMSKS' region motif. K604 contacts ATP. The Zn(2+) site is built by C904, C907, C923, and C926.

It belongs to the class-I aminoacyl-tRNA synthetase family. IleS type 1 subfamily. Monomer. Requires Zn(2+) as cofactor.

It is found in the cytoplasm. It carries out the reaction tRNA(Ile) + L-isoleucine + ATP = L-isoleucyl-tRNA(Ile) + AMP + diphosphate. Its function is as follows. Catalyzes the attachment of isoleucine to tRNA(Ile). As IleRS can inadvertently accommodate and process structurally similar amino acids such as valine, to avoid such errors it has two additional distinct tRNA(Ile)-dependent editing activities. One activity is designated as 'pretransfer' editing and involves the hydrolysis of activated Val-AMP. The other activity is designated 'posttransfer' editing and involves deacylation of mischarged Val-tRNA(Ile). The polypeptide is Isoleucine--tRNA ligase (Symbiobacterium thermophilum (strain DSM 24528 / JCM 14929 / IAM 14863 / T)).